Consider the following 385-residue polypeptide: UPF0744 protein YSC83 (385 aa).

Belongs to the UPF0744 family.

The protein localises to the mitochondrion outer membrane. The sequence is that of UPF0744 protein YSC83 (YSC83) from Saccharomyces cerevisiae (strain ATCC 204508 / S288c) (Baker's yeast).